We begin with the raw amino-acid sequence, 509 residues long: Heat shock 70 kDa protein 14 (509 aa).

It belongs to the heat shock protein 70 family. As to quaternary structure, component of ribosome-associated complex (RAC), a heterodimer composed of Hsp70/DnaK-type chaperone HSPA14 and Hsp40/DnaJ-type chaperone DNAJC2.

It localises to the cytoplasm. It is found in the cytosol. Functionally, component of the ribosome-associated complex (RAC), a complex involved in folding or maintaining nascent polypeptides in a folding-competent state. In the RAC complex, binds to the nascent polypeptide chain, while DNAJC2 stimulates its ATPase activity. This is Heat shock 70 kDa protein 14 (HSPA14) from Macaca fascicularis (Crab-eating macaque).